The chain runs to 152 residues: uncharacterized protein (152 aa).

The chain crosses the membrane as a helical span at residues 7–27; the sequence is TLSVIVFLISLIIIFGIYFSS.

The protein resides in the membrane. This is an uncharacterized protein from Methanocaldococcus jannaschii (strain ATCC 43067 / DSM 2661 / JAL-1 / JCM 10045 / NBRC 100440) (Methanococcus jannaschii).